The chain runs to 248 residues: Pyridoxine 5'-phosphate synthase (248 aa).

Residue Asn7 coordinates 3-amino-2-oxopropyl phosphate. 9–10 (DH) serves as a coordination point for 1-deoxy-D-xylulose 5-phosphate. Arg18 serves as a coordination point for 3-amino-2-oxopropyl phosphate. His52 serves as the catalytic Proton acceptor. 1-deoxy-D-xylulose 5-phosphate contacts are provided by Arg54 and His59. The Proton acceptor role is filled by Glu79. Thr109 lines the 1-deoxy-D-xylulose 5-phosphate pocket. His201 serves as the catalytic Proton donor. 3-amino-2-oxopropyl phosphate-binding positions include Gly202 and 223–224 (GH).

It belongs to the PNP synthase family. In terms of assembly, homooctamer; tetramer of dimers.

It is found in the cytoplasm. The enzyme catalyses 3-amino-2-oxopropyl phosphate + 1-deoxy-D-xylulose 5-phosphate = pyridoxine 5'-phosphate + phosphate + 2 H2O + H(+). The protein operates within cofactor biosynthesis; pyridoxine 5'-phosphate biosynthesis; pyridoxine 5'-phosphate from D-erythrose 4-phosphate: step 5/5. Its function is as follows. Catalyzes the complicated ring closure reaction between the two acyclic compounds 1-deoxy-D-xylulose-5-phosphate (DXP) and 3-amino-2-oxopropyl phosphate (1-amino-acetone-3-phosphate or AAP) to form pyridoxine 5'-phosphate (PNP) and inorganic phosphate. This is Pyridoxine 5'-phosphate synthase from Opitutus terrae (strain DSM 11246 / JCM 15787 / PB90-1).